The following is a 314-amino-acid chain: Putative steroid dehydrogenase 1 (314 aa).

47 to 76 (ASWAVVTGATDGIGKSYSFELAKRGFNVYI) serves as a coordination point for NADP(+). Y202 is a catalytic residue.

It belongs to the short-chain dehydrogenases/reductases (SDR) family. 17-beta-HSD 3 subfamily.

The sequence is that of Putative steroid dehydrogenase 1 (stdh-1) from Caenorhabditis elegans.